Consider the following 130-residue polypeptide: Large ribosomal subunit protein bL20 (130 aa).

Belongs to the bacterial ribosomal protein bL20 family.

Functionally, binds directly to 23S ribosomal RNA and is necessary for the in vitro assembly process of the 50S ribosomal subunit. It is not involved in the protein synthesizing functions of that subunit. This is Large ribosomal subunit protein bL20 from Salinispora tropica (strain ATCC BAA-916 / DSM 44818 / JCM 13857 / NBRC 105044 / CNB-440).